We begin with the raw amino-acid sequence, 242 residues long: E3 ubiquitin-protein ligase ZNRF2 (242 aa).

A disordered region spans residues 1–141; it reads MGAKQSGPAA…VGGSPGGPRL (141 aa). Glycine 2 is lipidated: N-myristoyl glycine. Residues serine 19, serine 21, and serine 25 each carry the phosphoserine modification. Low complexity predominate over residues 19–29; sequence SGSDLPSSSSG. Residues 30–41 show a composition bias toward gly residues; it reads GANGTAGGGGGA. Residues 59–97 show a composition bias toward low complexity; that stretch reads PSASGGAAAAAAAPAAPAAPRSRSLGGAVGSVASGARAA. Serine 82, serine 89, serine 113, serine 116, and serine 135 each carry phosphoserine. A compositionally biased stretch (polar residues) spans 99–118; sequence SPFSIPNSSSGPYGSQDSVH. Serine 145 carries the post-translational modification Phosphoserine; by MTOR. 2 positions are modified to phosphoserine: serine 151 and serine 193. The RING-type; atypical zinc-finger motif lies at 199–240; sequence CAICLEELQQGDTIARLPCLCIYHKGCIDEWFEVNRSCPEHP.

Interacts with UBE2N. Interacts with ZNRF1. Interacts (when phosphorylated) with YWHAE. Post-translationally, phosphorylated; leading to binding to YWHAE. Phosphorylated by MTOR at Ser-145 and dephosphorylated by PP6C. Ser-145 phosphorylation stimulates vesicle-to-cytosol translocation. As to expression, highly expressed in the brain, with higher expression during development than in adult. Expressed also in mammary glands, testis, colon and kidney.

The protein resides in the endosome membrane. It is found in the lysosome membrane. It localises to the presynaptic cell membrane. Its subcellular location is the cytoplasm. It catalyses the reaction S-ubiquitinyl-[E2 ubiquitin-conjugating enzyme]-L-cysteine + [acceptor protein]-L-lysine = [E2 ubiquitin-conjugating enzyme]-L-cysteine + N(6)-ubiquitinyl-[acceptor protein]-L-lysine.. It functions in the pathway protein modification; protein ubiquitination. E3 ubiquitin-protein ligase that plays a role in the establishment and maintenance of neuronal transmission and plasticity. Ubiquitinates the Na(+)/K(+) ATPase alpha-1 subunit/ATP1A1 and thereby influences its endocytosis and/or degradation. Acts also as a positive regulator of mTORC1 activation by amino acids, which functions upstream of the V-ATPase and of Rag-GTPases. In turn, phosphorylation by mTOR leads to its inhibition via targeting to the cytosol allowing a self-regulating feedback mechanism. The sequence is that of E3 ubiquitin-protein ligase ZNRF2 (ZNRF2) from Homo sapiens (Human).